The following is a 452-amino-acid chain: Bifunctional protein GlmU (452 aa).

A pyrophosphorylase region spans residues methionine 1–arginine 231. UDP-N-acetyl-alpha-D-glucosamine contacts are provided by residues leucine 10–glycine 13, lysine 24, glutamine 77, glycine 82–threonine 83, tyrosine 105–aspartate 107, glycine 143, glutamate 157, asparagine 172, and asparagine 229. Aspartate 107 contacts Mg(2+). Asparagine 229 is a binding site for Mg(2+). The tract at residues alanine 232–serine 252 is linker. The segment at glycine 253–valine 452 is N-acetyltransferase. Residues arginine 318 and lysine 336 each coordinate UDP-N-acetyl-alpha-D-glucosamine. Histidine 348 functions as the Proton acceptor in the catalytic mechanism. UDP-N-acetyl-alpha-D-glucosamine is bound by residues tyrosine 351 and asparagine 362. Residues alanine 365, asparagine 371–tyrosine 372, serine 390, serine 408, and arginine 425 each bind acetyl-CoA.

In the N-terminal section; belongs to the N-acetylglucosamine-1-phosphate uridyltransferase family. This sequence in the C-terminal section; belongs to the transferase hexapeptide repeat family. In terms of assembly, homotrimer. Mg(2+) is required as a cofactor.

The protein localises to the cytoplasm. The enzyme catalyses alpha-D-glucosamine 1-phosphate + acetyl-CoA = N-acetyl-alpha-D-glucosamine 1-phosphate + CoA + H(+). The catalysed reaction is N-acetyl-alpha-D-glucosamine 1-phosphate + UTP + H(+) = UDP-N-acetyl-alpha-D-glucosamine + diphosphate. Its pathway is nucleotide-sugar biosynthesis; UDP-N-acetyl-alpha-D-glucosamine biosynthesis; N-acetyl-alpha-D-glucosamine 1-phosphate from alpha-D-glucosamine 6-phosphate (route II): step 2/2. The protein operates within nucleotide-sugar biosynthesis; UDP-N-acetyl-alpha-D-glucosamine biosynthesis; UDP-N-acetyl-alpha-D-glucosamine from N-acetyl-alpha-D-glucosamine 1-phosphate: step 1/1. It functions in the pathway bacterial outer membrane biogenesis; LPS lipid A biosynthesis. Its function is as follows. Catalyzes the last two sequential reactions in the de novo biosynthetic pathway for UDP-N-acetylglucosamine (UDP-GlcNAc). The C-terminal domain catalyzes the transfer of acetyl group from acetyl coenzyme A to glucosamine-1-phosphate (GlcN-1-P) to produce N-acetylglucosamine-1-phosphate (GlcNAc-1-P), which is converted into UDP-GlcNAc by the transfer of uridine 5-monophosphate (from uridine 5-triphosphate), a reaction catalyzed by the N-terminal domain. This chain is Bifunctional protein GlmU, found in Allorhizobium ampelinum (strain ATCC BAA-846 / DSM 112012 / S4) (Agrobacterium vitis (strain S4)).